Consider the following 255-residue polypeptide: Glutamate racemase (255 aa).

Substrate is bound by residues 7–8 and 39–40; these read DS and YG. Cys70 serves as the catalytic Proton donor/acceptor. Position 71-72 (71-72) interacts with substrate; that stretch reads NT. Catalysis depends on Cys181, which acts as the Proton donor/acceptor. 182–183 provides a ligand contact to substrate; that stretch reads TH.

It belongs to the aspartate/glutamate racemases family.

The catalysed reaction is L-glutamate = D-glutamate. The protein operates within cell wall biogenesis; peptidoglycan biosynthesis. Functionally, provides the (R)-glutamate required for cell wall biosynthesis. This Helicobacter acinonychis (strain Sheeba) protein is Glutamate racemase.